Consider the following 416-residue polypeptide: Serine hydroxymethyltransferase (416 aa).

Residues L118 and 122-124 (GHL) each bind (6S)-5,6,7,8-tetrahydrofolate. K227 carries the N6-(pyridoxal phosphate)lysine modification. Residues E242 and 350–352 (SPF) each bind (6S)-5,6,7,8-tetrahydrofolate.

This sequence belongs to the SHMT family. In terms of assembly, homodimer. The cofactor is pyridoxal 5'-phosphate.

The protein resides in the cytoplasm. The catalysed reaction is (6R)-5,10-methylene-5,6,7,8-tetrahydrofolate + glycine + H2O = (6S)-5,6,7,8-tetrahydrofolate + L-serine. It functions in the pathway one-carbon metabolism; tetrahydrofolate interconversion. The protein operates within amino-acid biosynthesis; glycine biosynthesis; glycine from L-serine: step 1/1. Functionally, catalyzes the reversible interconversion of serine and glycine with tetrahydrofolate (THF) serving as the one-carbon carrier. This reaction serves as the major source of one-carbon groups required for the biosynthesis of purines, thymidylate, methionine, and other important biomolecules. Also exhibits THF-independent aldolase activity toward beta-hydroxyamino acids, producing glycine and aldehydes, via a retro-aldol mechanism. This is Serine hydroxymethyltransferase from Syntrophotalea carbinolica (strain DSM 2380 / NBRC 103641 / GraBd1) (Pelobacter carbinolicus).